The sequence spans 148 residues: Small ribosomal subunit protein uS9 (148 aa).

The protein belongs to the universal ribosomal protein uS9 family.

This Aedes aegypti (Yellowfever mosquito) protein is Small ribosomal subunit protein uS9 (RpS16).